The chain runs to 364 residues: 3-isopropylmalate dehydrogenase (364 aa).

Position 78-91 (78-91) interacts with NAD(+); sequence GKKWDNFPIEERPE. The substrate site is built by R99, R109, R138, and D228. 3 residues coordinate Mg(2+): D228, D252, and D256. Residue 286–298 participates in NAD(+) binding; that stretch reads GSAPDIAGKNIAN.

Belongs to the isocitrate and isopropylmalate dehydrogenases family. LeuB type 1 subfamily. Homodimer. Requires Mg(2+) as cofactor. The cofactor is Mn(2+).

It is found in the cytoplasm. The enzyme catalyses (2R,3S)-3-isopropylmalate + NAD(+) = 4-methyl-2-oxopentanoate + CO2 + NADH. It functions in the pathway amino-acid biosynthesis; L-leucine biosynthesis; L-leucine from 3-methyl-2-oxobutanoate: step 3/4. Catalyzes the oxidation of 3-carboxy-2-hydroxy-4-methylpentanoate (3-isopropylmalate) to 3-carboxy-4-methyl-2-oxopentanoate. The product decarboxylates to 4-methyl-2 oxopentanoate. In Buchnera aphidicola subsp. Uroleucon obscurum, this protein is 3-isopropylmalate dehydrogenase.